We begin with the raw amino-acid sequence, 339 residues long: Centrosomal protein of 41 kDa (339 aa).

The segment at 56 to 99 is disordered; it reads RLEDSDSATSEADTDIAAKTNGKGSPEEQSPSPVQFINSTGAGD. Residues Ser-62 and Ser-65 each carry the phosphoserine modification. Residues 62–73 are compositionally biased toward low complexity; that stretch reads SATSEADTDIAA. A Phosphothreonine modification is found at Thr-75. Phosphoserine occurs at positions 80 and 87. Residues 82 to 99 show a composition bias toward polar residues; the sequence is EEQSPSPVQFINSTGAGD. One can recognise a Rhodanese domain in the interval 135–232; sequence PDCPFLLLDV…LAQKFPEGLV (98 aa). Positions 283-339 are disordered; sequence DQGPANNPSRLNQNNSAGRDLKVPAGRGGQNLPTGCPTSHSNSRTLNSGHLQGKPWK. Over residues 286–299 the composition is skewed to polar residues; that stretch reads PANNPSRLNQNNSA. Arg-309 is modified (omega-N-methylarginine). Polar residues predominate over residues 313-332; the sequence is NLPTGCPTSHSNSRTLNSGH.

This sequence belongs to the CEP41 family. In terms of assembly, found in a complex with TTLL6.

It is found in the cytoplasm. The protein localises to the cytoskeleton. It localises to the microtubule organizing center. The protein resides in the centrosome. Its subcellular location is the cell projection. It is found in the cilium. The protein localises to the cilium basal body. Required during ciliogenesis for tubulin glutamylation in cilium. Probably acts by participating in the transport of TTLL6, a tubulin polyglutamylase, between the basal body and the cilium. This Rattus norvegicus (Rat) protein is Centrosomal protein of 41 kDa (Cep41).